Reading from the N-terminus, the 110-residue chain is Large ribosomal subunit protein uL22 (110 aa).

The protein belongs to the universal ribosomal protein uL22 family. Part of the 50S ribosomal subunit.

Functionally, this protein binds specifically to 23S rRNA; its binding is stimulated by other ribosomal proteins, e.g. L4, L17, and L20. It is important during the early stages of 50S assembly. It makes multiple contacts with different domains of the 23S rRNA in the assembled 50S subunit and ribosome. The globular domain of the protein is located near the polypeptide exit tunnel on the outside of the subunit, while an extended beta-hairpin is found that lines the wall of the exit tunnel in the center of the 70S ribosome. This Bdellovibrio bacteriovorus (strain ATCC 15356 / DSM 50701 / NCIMB 9529 / HD100) protein is Large ribosomal subunit protein uL22.